The chain runs to 221 residues: Epididymal secretory glutathione peroxidase (221 aa).

The N-terminal stretch at 1–21 is a signal peptide; that stretch reads MTTQLRVVHLLPLLLACFVQT. Residue Cys-73 is part of the active site.

This sequence belongs to the glutathione peroxidase family. As to expression, epididymis.

Its subcellular location is the secreted. The enzyme catalyses 2 glutathione + H2O2 = glutathione disulfide + 2 H2O. Protects cells and enzymes from oxidative damage, by catalyzing the reduction of hydrogen peroxide, lipid peroxides and organic hydroperoxide, by glutathione. May constitute a glutathione peroxidase-like protective system against peroxide damage in sperm membrane lipids. The sequence is that of Epididymal secretory glutathione peroxidase (GPX5) from Macaca fascicularis (Crab-eating macaque).